Here is a 453-residue protein sequence, read N- to C-terminus: MITLKQALSLSQDELETLKNEIDAKVRASDLNAYIKAPSLNGASAKGVPILIKDNISVKGWEITCSSKILEGYVAPYHASVMENLHQNGMAGFGLSNMDEFAMGSTTESSCYGITKNPRDKNRVPGGSSGGSAAAVAGGLAVAALGSDTGGSIRQPASYCGCVGLKPTYGRVSRYGLIAYCSSFDQIGPITQNVEDASILFDAISGHDNKDSTSANLKPTQTFKNLNRDKRFKIAILRDHIKDASNEVQLAYENTLKALKEMGHEIVEKKMLDSHYQISIYYIISMAEASSNLARFDGVRYGRRAQNIKDLKELYLKSRSEGFGDEVKRRIMLGNFVLSSGYYDAYYLKAQQMRLMIKEQYNKIFEEVDLIFTPVAPTSAHLFNYHASPLEMYLSDIYTIGANLSGLPALSLPVAKDPLGLPIGMQFIAKAFDEQSLLDVSYALEQELDLKLD.

Catalysis depends on charge relay system residues K53 and S128. S152 acts as the Acyl-ester intermediate in catalysis.

It belongs to the amidase family. GatA subfamily. As to quaternary structure, heterotrimer of A, B and C subunits.

The enzyme catalyses L-glutamyl-tRNA(Gln) + L-glutamine + ATP + H2O = L-glutaminyl-tRNA(Gln) + L-glutamate + ADP + phosphate + H(+). Allows the formation of correctly charged Gln-tRNA(Gln) through the transamidation of misacylated Glu-tRNA(Gln) in organisms which lack glutaminyl-tRNA synthetase. The reaction takes place in the presence of glutamine and ATP through an activated gamma-phospho-Glu-tRNA(Gln). This is Glutamyl-tRNA(Gln) amidotransferase subunit A from Helicobacter pylori (strain P12).